We begin with the raw amino-acid sequence, 1006 residues long: DNA polymerase (1006 aa).

It belongs to the DNA polymerase type-B family. Interacts with OPG148. Component of the Uracil-DNA glycosylase(UDG)-OPG148-polymerase complex; OPG148 and OPG116/UDG form a heterodimeric processivity factor that associates with OPG071 to form the processive polymerase holoenzyme.

It carries out the reaction DNA(n) + a 2'-deoxyribonucleoside 5'-triphosphate = DNA(n+1) + diphosphate. Catalyzes DNA synthesis. Acquires processivity by associating with a heterodimeric processivity factor comprised of the viral OPG148 and OPG116 proteins, thereby forming the DNA polymerase holoenzyme. Displays 3'- to 5' exonuclease activity. Might participate in viral DNA recombination. Does not perform OPG116/D4synthesis across an abasic site. This is DNA polymerase (OPG071) from Monkeypox virus.